The primary structure comprises 185 residues: Ribosome-recycling factor (185 aa).

The protein belongs to the RRF family.

Its subcellular location is the cytoplasm. Its function is as follows. Responsible for the release of ribosomes from messenger RNA at the termination of protein biosynthesis. May increase the efficiency of translation by recycling ribosomes from one round of translation to another. The chain is Ribosome-recycling factor from Dehalococcoides mccartyi (strain CBDB1).